The sequence spans 1201 residues: DNA-directed RNA polymerase subunit beta' (1201 aa).

Residues Cys-60, Cys-62, Cys-75, and Cys-78 each coordinate Zn(2+). Mg(2+) contacts are provided by Asp-449, Asp-451, and Asp-453. Residues Cys-818, Cys-892, Cys-899, and Cys-902 each coordinate Zn(2+).

The protein belongs to the RNA polymerase beta' chain family. The RNAP catalytic core consists of 2 alpha, 1 beta, 1 beta' and 1 omega subunit. When a sigma factor is associated with the core the holoenzyme is formed, which can initiate transcription. Mg(2+) is required as a cofactor. The cofactor is Zn(2+).

The catalysed reaction is RNA(n) + a ribonucleoside 5'-triphosphate = RNA(n+1) + diphosphate. DNA-dependent RNA polymerase catalyzes the transcription of DNA into RNA using the four ribonucleoside triphosphates as substrates. This Listeria monocytogenes serotype 4b (strain F2365) protein is DNA-directed RNA polymerase subunit beta'.